Reading from the N-terminus, the 403-residue chain is 4,4'-dithiodibutanoate disulfide reductase (403 aa).

Q103 is an FMN binding site. The active-site Proton donor is Y173. 348 to 349 (AR) lines the FMN pocket.

This sequence belongs to the NADH:flavin oxidoreductase/NADH oxidase family. The cofactor is FMN.

The catalysed reaction is 2 4-sulfanylbutanoate + NAD(+) = 4,4'-disulfanyldibutanoate + NADH + H(+). With respect to regulation, inactivated by cobalt, nickel and zinc ions. Functionally, involved in the degradation of the organic disulfide 4,4'-dithiodibutyric acid (DTDB). Catalyzes the initial cleavage of DTDB into 2 molecules of 4-mercaptobutyric acid (4MB). Low activities are observed with other disulfide compounds, such as 3,3'-dithiodipropionic acid DTDP, 3,3'-thiodipropionic acid TDP and DTNB. This is 4,4'-dithiodibutanoate disulfide reductase from Rhodococcus erythropolis (Arthrobacter picolinophilus).